A 749-amino-acid polypeptide reads, in one-letter code: G-type lectin S-receptor-like serine/threonine-protein kinase At1g61460 (749 aa).

The signal sequence occupies residues 1 to 25 (MRITFFASLLLFTNTIFISFSFAIA). The 120-residue stretch at 26–145 (GINKESPLSI…FSGRTLWQSF (120 aa)) folds into the Bulb-type lectin domain. Over 26 to 392 (GINKESPLSI…ELGGNKRKKT (367 aa)) the chain is Extracellular. Residues Asn54, Asn95, Asn118, and Asn135 are each glycosylated (N-linked (GlcNAc...) asparagine). In terms of domain architecture, EGF-like; atypical spans 247 to 280 (PAHSCDYYGVCGPFGICVKSVCKCFKGFIPKYIE). 2 disulfides stabilise this stretch: Cys251–Cys263 and Cys257–Cys268. N-linked (GlcNAc...) asparagine glycosylation is found at Asn286, Asn302, and Asn341. Residues 299 to 381 (CQENSTKKDA…GEILSIRLAR (83 aa)) enclose the PAN domain. 2 cysteine pairs are disulfide-bonded: Cys334-Cys355 and Cys338-Cys344. Residues 393 to 413 (ITASIVSLSLFLILGSTAFGF) form a helical membrane-spanning segment. The Cytoplasmic portion of the chain corresponds to 414 to 749 (WRYRVKHNAS…EMTKSVILGR (336 aa)). One can recognise a Protein kinase domain in the interval 454–721 (FSLSNKLGQG…DLPSPKQPTF (268 aa)). Residues 460-468 (LGQGGFGSV) and Lys482 each bind ATP. Residues 543–560 (RKRLEIDWPKRFDIIQGI) form a caM-binding region. The active-site Proton acceptor is Asp579.

The protein belongs to the protein kinase superfamily. Ser/Thr protein kinase family.

It localises to the cell membrane. The enzyme catalyses L-seryl-[protein] + ATP = O-phospho-L-seryl-[protein] + ADP + H(+). The catalysed reaction is L-threonyl-[protein] + ATP = O-phospho-L-threonyl-[protein] + ADP + H(+). This Arabidopsis thaliana (Mouse-ear cress) protein is G-type lectin S-receptor-like serine/threonine-protein kinase At1g61460.